The sequence spans 445 residues: Inositol-pentakisphosphate 2-kinase IPK1 (445 aa).

Residues 19 to 22 (GAAN) and Arg40 contribute to the ATP site. Residue Arg127 participates in substrate binding. Residues 144–146 (SDH) and 162–164 (EIK) contribute to the ATP site. An EXKPK motif motif is present at residues 162-166 (EIKAK). The substrate site is built by Lys166, Lys196, and Asn234. Position 237 (Arg237) interacts with ATP. 4 residues coordinate Zn(2+): His312, Cys322, Cys325, and His341. Asp363 is a substrate binding site. Asp402 is an ATP binding site. Substrate is bound by residues Lys406, Lys410, and Tyr414.

It belongs to the IPK1 type 2 family. Zn(2+) serves as cofactor.

The catalysed reaction is 1D-myo-inositol 1,3,4,5,6-pentakisphosphate + ATP = 1D-myo-inositol hexakisphosphate + ADP + H(+). Functionally, phosphorylates Ins(1,3,4,5,6)P5 at position 2 to form Ins(1,2,3,4,5,6)P6 (InsP6 or phytate). Phytate is a regulator of intracellular signaling, a highly abundant animal antinutrient, and a phosphate store in plant seeds. Also phosphorylates Ins(1,3,4,6)P4 and Ins(1,4,5,6)P4 to produce Ins(1,2,3,4,6)P5 and Ins(1,2,4,5,6)P5. This is Inositol-pentakisphosphate 2-kinase IPK1 from Oryza sativa subsp. indica (Rice).